Here is a 294-residue protein sequence, read N- to C-terminus: tRNA dimethylallyltransferase (294 aa).

ATP is bound at residue glycine 10–threonine 17. Threonine 12–threonine 17 contributes to the substrate binding site. The tract at residues aspartate 35–glutamine 38 is interaction with substrate tRNA.

Belongs to the IPP transferase family. Monomer. Mg(2+) is required as a cofactor.

The enzyme catalyses adenosine(37) in tRNA + dimethylallyl diphosphate = N(6)-dimethylallyladenosine(37) in tRNA + diphosphate. Its function is as follows. Catalyzes the transfer of a dimethylallyl group onto the adenine at position 37 in tRNAs that read codons beginning with uridine, leading to the formation of N6-(dimethylallyl)adenosine (i(6)A). This chain is tRNA dimethylallyltransferase, found in Streptococcus pneumoniae serotype 2 (strain D39 / NCTC 7466).